A 433-amino-acid polypeptide reads, in one-letter code: Serine hydroxymethyltransferase (433 aa).

Residues Leu133 and 137 to 139 each bind (6S)-5,6,7,8-tetrahydrofolate; that span reads GHL. Residue Lys242 is modified to N6-(pyridoxal phosphate)lysine. Position 366–368 (366–368) interacts with (6S)-5,6,7,8-tetrahydrofolate; the sequence is SPF.

Belongs to the SHMT family. Homodimer. It depends on pyridoxal 5'-phosphate as a cofactor.

It localises to the cytoplasm. It catalyses the reaction (6R)-5,10-methylene-5,6,7,8-tetrahydrofolate + glycine + H2O = (6S)-5,6,7,8-tetrahydrofolate + L-serine. Its pathway is one-carbon metabolism; tetrahydrofolate interconversion. It participates in amino-acid biosynthesis; glycine biosynthesis; glycine from L-serine: step 1/1. In terms of biological role, catalyzes the reversible interconversion of serine and glycine with tetrahydrofolate (THF) serving as the one-carbon carrier. This reaction serves as the major source of one-carbon groups required for the biosynthesis of purines, thymidylate, methionine, and other important biomolecules. Also exhibits THF-independent aldolase activity toward beta-hydroxyamino acids, producing glycine and aldehydes, via a retro-aldol mechanism. This chain is Serine hydroxymethyltransferase, found in Beijerinckia indica subsp. indica (strain ATCC 9039 / DSM 1715 / NCIMB 8712).